Here is a 393-residue protein sequence, read N- to C-terminus: L-methionine gamma-lyase (393 aa).

Pyridoxal 5'-phosphate is bound by residues 63-65 (YQR) and 93-94 (GM). L-homocysteine is bound at residue tyrosine 119. Residue 206–208 (SAT) participates in pyridoxal 5'-phosphate binding. Lysine 209 is subject to N6-(pyridoxal phosphate)lysine. Arginine 367 contacts L-homocysteine. An L-methionine-binding site is contributed by arginine 367.

This sequence belongs to the trans-sulfuration enzymes family. L-methionine gamma-lyase subfamily. Homotetramer. The cofactor is pyridoxal 5'-phosphate.

The catalysed reaction is L-methionine + H2O = methanethiol + 2-oxobutanoate + NH4(+). The enzyme catalyses L-homocysteine + H2O = 2-oxobutanoate + hydrogen sulfide + NH4(+) + H(+). Its function is as follows. Catalyzes the alpha,gamma-elimination of L-methionine to produce methanethiol, 2-oxobutanoate and ammonia. Is also able to catalyze the alpha,gamma-elimination of L-homocysteine. This Brevibacterium sandarakinum protein is L-methionine gamma-lyase.